We begin with the raw amino-acid sequence, 371 residues long: Protease PrtS (371 aa).

Residue His169 coordinates Zn(2+). Glu170 is an active-site residue. Residues His173 and Glu193 each contribute to the Zn(2+) site. Residue His273 is the Proton donor of the active site. Positions 352 to 371 (KEEDKDKGKDEGKDKAETKV) are disordered.

It belongs to the peptidase M4 family. Requires Zn(2+) as cofactor.

The protein resides in the secreted. Inhibited by 8 mM 1,10-phenanthroline, but not by EDTA or PMSF. Its function is as follows. Metalloprotease involved in the inhibition of insect antibacterial peptides. Reduces the antibacterial activity of G.mellonella hemolymph by 50%. Reduces the antibacterial activity of cecropin A by 80% and completely inhibits cecropin B. The chain is Protease PrtS from Photorhabdus sp. (strain Az29).